The chain runs to 203 residues: MRKKQLLRIGVGGPVGSGKTALLSQLCLALRDKYDMAVVTNDIYTHEDAQFLTRNNALAEDRIIGVETGGCPHTAIREDASMNLAAIDDLHERHPNLDFVLVESGGDNLSATFSPELSDLTLYVIDVSAGDKIPRKGGPGITKSDLLIINKIDVADLVGASLEVMDRDTKKMRGDRPFVFSNMKTQQGLAEIIDFIETEGMLK.

Gly13 to Thr20 contacts GTP.

This sequence belongs to the SIMIBI class G3E GTPase family. UreG subfamily. As to quaternary structure, homodimer. UreD, UreF and UreG form a complex that acts as a GTP-hydrolysis-dependent molecular chaperone, activating the urease apoprotein by helping to assemble the nickel containing metallocenter of UreC. The UreE protein probably delivers the nickel.

It is found in the cytoplasm. Its function is as follows. Facilitates the functional incorporation of the urease nickel metallocenter. This process requires GTP hydrolysis, probably effectuated by UreG. The chain is Urease accessory protein UreG from Psychromonas ingrahamii (strain DSM 17664 / CCUG 51855 / 37).